The sequence spans 647 residues: S-adenosyl-L-methionine-dependent tRNA 4-demethylwyosine synthase (647 aa).

The Flavodoxin-like domain maps to 50–198 (GKIFFISQTG…AFQDWCDGVI (149 aa)). FMN contacts are provided by residues 56–60 (SQTGT) and 142–174 (VFGV…LEMI). The region spanning 316-559 (YGIESHRCME…LSLKSNGEYE (244 aa)) is the Radical SAM core domain. 3 residues coordinate [4Fe-4S] cluster: cysteine 332, cysteine 336, and cysteine 339.

This sequence belongs to the TYW1 family. Requires [4Fe-4S] cluster as cofactor.

The catalysed reaction is N(1)-methylguanosine(37) in tRNA(Phe) + pyruvate + S-adenosyl-L-methionine = 4-demethylwyosine(37) in tRNA(Phe) + 5'-deoxyadenosine + L-methionine + CO2 + H2O. Its pathway is tRNA modification; wybutosine-tRNA(Phe) biosynthesis. In terms of biological role, probable component of the wybutosine biosynthesis pathway. Wybutosine is a hyper modified guanosine with a tricyclic base found at the 3'-position adjacent to the anticodon of eukaryotic phenylalanine tRNA. Catalyzes the condensation of N-methylguanine with 2 carbon atoms from pyruvate to form the tricyclic 4-demethylwyosine, an intermediate in wybutosine biosynthesis. The sequence is that of S-adenosyl-L-methionine-dependent tRNA 4-demethylwyosine synthase (TYW1) from Arabidopsis thaliana (Mouse-ear cress).